A 369-amino-acid chain; its full sequence is Gap junction alpha-5 protein (369 aa).

The Cytoplasmic portion of the chain corresponds to 2–19 (GDWSFLGEFLEEVHKHST). A helical transmembrane segment spans residues 20–40 (VVGKVWLTVLFIFRMLVLGTA). Residues 41–76 (AGPLWGDEQSDFMCDTQQPGCENVCYDKAFPISHVR) are Extracellular-facing. The helical transmembrane segment at 77-97 (FWVLQIIFVSTPSLVYMGHAM) threads the bilayer. The Cytoplasmic segment spans residues 98–169 (HTVRMEEKRK…YSILIRTAME (72 aa)). A helical transmembrane segment spans residues 170 to 190 (IAFIVGQYILYGIFLETLYIC). Topologically, residues 191-210 (QRAPCPHPVNCYVSRPTEKN) are extracellular. The chain crosses the membrane as a helical span at residues 211-231 (VFIIFMLAVAVLSLFLSLAEL). Topologically, residues 232–369 (YHLGWKKAKE…SKARSDDLSV (138 aa)) are cytoplasmic. The disordered stretch occupies residues 347–369 (NEKRRFSKASRASSKARSDDLSV).

Belongs to the connexin family. Alpha-type (group II) subfamily. As to quaternary structure, a connexon is composed of a hexamer of connexins. In terms of tissue distribution, mostly in heart, and in the whole embryo, liver, stomach, and pectoral muscle.

The protein resides in the cell membrane. Its subcellular location is the cell junction. It localises to the gap junction. Functionally, one gap junction consists of a cluster of closely packed pairs of transmembrane channels, the connexons, through which materials of low MW diffuse from one cell to a neighboring cell. This is Gap junction alpha-5 protein (GJA5) from Gallus gallus (Chicken).